Consider the following 486-residue polypeptide: Glutamate--tRNA ligase (486 aa).

The 'HIGH' region signature appears at 11–21; the sequence is PSPTGLLHIGN. The 'KMSKS' region motif lies at 255–259; that stretch reads KLSKR. Lys258 contributes to the ATP binding site.

It belongs to the class-I aminoacyl-tRNA synthetase family. Glutamate--tRNA ligase type 1 subfamily. In terms of assembly, monomer.

The protein resides in the cytoplasm. It carries out the reaction tRNA(Glu) + L-glutamate + ATP = L-glutamyl-tRNA(Glu) + AMP + diphosphate. Functionally, catalyzes the attachment of glutamate to tRNA(Glu) in a two-step reaction: glutamate is first activated by ATP to form Glu-AMP and then transferred to the acceptor end of tRNA(Glu). This is Glutamate--tRNA ligase from Streptococcus pneumoniae (strain Hungary19A-6).